The primary structure comprises 260 residues: Indole-3-glycerol phosphate synthase (260 aa).

It belongs to the TrpC family.

The catalysed reaction is 1-(2-carboxyphenylamino)-1-deoxy-D-ribulose 5-phosphate + H(+) = (1S,2R)-1-C-(indol-3-yl)glycerol 3-phosphate + CO2 + H2O. It participates in amino-acid biosynthesis; L-tryptophan biosynthesis; L-tryptophan from chorismate: step 4/5. The chain is Indole-3-glycerol phosphate synthase (trpC) from Lacticaseibacillus casei (Lactobacillus casei).